Reading from the N-terminus, the 1819-residue chain is MSLSQQLKQINEKSASVALDRKSRSKLHSKSLIFAPKVAATQDYDYLHSVGVDGLTELCTIDSRFLKFQQTLFADSTVNFDRNVQTKEIVDNLDASIAAFLNLVSPFYPLSPAVKAVEWLVRRFYINIHNSEALILTCLPHYQSQIFARVMNVIPKSSWPPIFNWLNGYRDMSKNPPSSSILKAFRNDYQLFKLYSEYITQQVSVETVYKEQLVFYLTNTIQLLASYSTDIEKLNEVYLPVILEVIGKFLLASNTSLDHDIKIAAYTLMSVVVSLVPLADDVHISLTRSILQVPGAFDPQLKRQTMIILAQTWQRYTGAKFDFEFFNTIPLDSLLKDNLLESLVHEGFDFNNFLLALISSTNDKRTLSLAKLFKIERANEAVATTFISRLIDAASFKPDTEARASIVAAFEAMLAGSRDTLVEYLGSKKEPMSLADLEMVLLTTLSSSDVDDSEINVAQSDEVQEANGSSNSEPVTLDGVKSHTKSFLFQCEDFNDLSRLLVSFLAPFESNSYANQIAKFCAAVFTGPNASITFTLRCSLTPIIPLKVRLACLICLKRKLKELAKSGDTKLHLILPILILGLYDDHQSIRAGFAESIHSLSTPSASKNASIFLEDEMYADVAASNKVLISPKDGDSLINLLTSTDSLLKETVLDKTRLVSVLFEVVFKAQQPSKKFGLVCQTFFIAQWSQLPFAAVFKSLIFKIMSGRNITAECPSRESFIKGDVAGLFSGYEAWMASAQESKLDFESDIVSPLVNLVGGQDELSTPNSSEIDEVGWLIKATDFTKCPVIQVAATKRVTQVFEFLKPEDKVRLYSKFIELQASDDELNFDAQEILQAMPLDFNSALTLLKNFQLVAQIPEQQIPKRRRRSSNSSKQTMAHEELVSIASVHLRKLTIVLDLLEYNLRKNLKEIKPELLSSFFGILTDLEYLGHDGDMPVLYTQEVLATCMLLAVKHIKAINENGSGRISIDSNSVRADLIVNTIRSSNSPQIQNRLLLVIAELASLAPEIILHSVMPIFTFMGAHTIRQDDEFSSFALQDTIAKVVPALAKSGASSFSNEIEFLLTSFVTAFQHIPRHRRVKLFSSLSKTLGAGNSIHTILFLSGVQYASLFGKGKHGDCLSLLEFTQGYMKQFQASEQLSAIHKFCTLWQLVPTKPLDPDSDEFRNLNSRPIFGASILSLNDTELVELKAGLITFIDSLLQTDEESVGYLQLRVNQLLLDSHSTDGEKTIIIDGCKNVASLLLGSLDNFGQVSKMTKVSDNLYQFLDDILSLLPLVYFLDSIIDVLKNPMGVDRVAINFARLAGNKIENELTASNLDEQIQFSLFEKLVPVLISGIKSNQDAEISQAYMDATAQAVAKLGNCTTCFNEAKNVSVLNECLSILTSESGLKSSKPECIISSMNCISSIINIMGVKAIGFFPKIFEPTVEIWKTTKTNEEDMQLVQTSVLLLFAQLVKKLPAFVTSKLDSIFTCTIGSLAVDATVRSSILSSIVEYVDTAYVLKALCNVWGEISKSDNAEVIGLYLGAMEKTIDQLEKKSAISQATLFIKWMIKAFEFRSSVSKSSQDFDTNTIHRLESSFHSCGLRYVMKLNDKTFRPLFAGLVRWAVNGEGSTSDTDEVSRYIAFFRFFNKVQEQLKSIITSYYSYLIDPVSSLLKRIDTMEDSINLKRMVFNSLTSSFKYDQDDFWSQPSRFESICGPLLQQIPTIENSIGKYLVKCVSAFVVNVSSEEHNEKLVHGLIHYISNEHSTTNSHTKTWTIRILKSVFQKMGDQWLSYLPTLIPYIAELLEDDDEDVELEVRKGLVKVLENVLGEPLDRYLN.

The HEAT repeat unit spans residues 1779 to 1817 (LIPYIAELLEDDDEDVELEVRKGLVKVLENVLGEPLDRY).

It belongs to the HEATR1/UTP10 family. In terms of assembly, component of the ribosomal small subunit (SSU) processome.

It is found in the nucleus. Its subcellular location is the nucleolus. Functionally, involved in nucleolar processing of pre-18S ribosomal RNA. Involved in ribosome biosynthesis. The polypeptide is U3 small nucleolar RNA-associated protein 10 (Meyerozyma guilliermondii (strain ATCC 6260 / CBS 566 / DSM 6381 / JCM 1539 / NBRC 10279 / NRRL Y-324) (Yeast)).